We begin with the raw amino-acid sequence, 338 residues long: GTPase Obg (338 aa).

In terms of domain architecture, Obg spans 1–159 (MKFLDKAIIH…RILRLELILI (159 aa)). An OBG-type G domain is found at 160–333 (AHVGTLGLPN…IVKKIYDFLK (174 aa)). Residues 166 to 173 (GLPNSGKS), 191 to 195 (FTTLK), 213 to 216 (DIPG), 283 to 286 (NKID), and 314 to 316 (SAI) each bind GTP. Positions 173 and 193 each coordinate Mg(2+).

This sequence belongs to the TRAFAC class OBG-HflX-like GTPase superfamily. OBG GTPase family. As to quaternary structure, monomer. Mg(2+) is required as a cofactor.

It is found in the cytoplasm. Functionally, an essential GTPase which binds GTP, GDP and possibly (p)ppGpp with moderate affinity, with high nucleotide exchange rates and a fairly low GTP hydrolysis rate. Plays a role in control of the cell cycle, stress response, ribosome biogenesis and in those bacteria that undergo differentiation, in morphogenesis control. In Buchnera aphidicola subsp. Baizongia pistaciae (strain Bp), this protein is GTPase Obg.